A 181-amino-acid chain; its full sequence is Acireductone dioxygenase (181 aa).

Fe(2+) contacts are provided by His-97, His-99, Glu-103, and His-141. Ni(2+)-binding residues include His-97, His-99, Glu-103, and His-141.

The protein belongs to the acireductone dioxygenase (ARD) family. As to quaternary structure, monomer. The cofactor is Fe(2+). Requires Ni(2+) as cofactor.

It carries out the reaction 1,2-dihydroxy-5-(methylsulfanyl)pent-1-en-3-one + O2 = 3-(methylsulfanyl)propanoate + CO + formate + 2 H(+). The enzyme catalyses 1,2-dihydroxy-5-(methylsulfanyl)pent-1-en-3-one + O2 = 4-methylsulfanyl-2-oxobutanoate + formate + 2 H(+). Its pathway is amino-acid biosynthesis; L-methionine biosynthesis via salvage pathway; L-methionine from S-methyl-5-thio-alpha-D-ribose 1-phosphate: step 5/6. In terms of biological role, catalyzes 2 different reactions between oxygen and the acireductone 1,2-dihydroxy-3-keto-5-methylthiopentene (DHK-MTPene) depending upon the metal bound in the active site. Fe-containing acireductone dioxygenase (Fe-ARD) produces formate and 2-keto-4-methylthiobutyrate (KMTB), the alpha-ketoacid precursor of methionine in the methionine recycle pathway. Ni-containing acireductone dioxygenase (Ni-ARD) produces methylthiopropionate, carbon monoxide and formate, and does not lie on the methionine recycle pathway. The protein is Acireductone dioxygenase of Pseudomonas savastanoi pv. phaseolicola (strain 1448A / Race 6) (Pseudomonas syringae pv. phaseolicola (strain 1448A / Race 6)).